Consider the following 417-residue polypeptide: UDP-N-acetylglucosamine 1-carboxyvinyltransferase 2 (417 aa).

Position 22 to 23 (Lys22 to Asn23) interacts with phosphoenolpyruvate. Residue Arg94 participates in UDP-N-acetyl-alpha-D-glucosamine binding. Cys118 serves as the catalytic Proton donor. Residue Cys118 is modified to 2-(S-cysteinyl)pyruvic acid O-phosphothioketal. Residues Arg123–Leu127, Asp306, and Ile328 contribute to the UDP-N-acetyl-alpha-D-glucosamine site.

This sequence belongs to the EPSP synthase family. MurA subfamily.

It is found in the cytoplasm. The catalysed reaction is phosphoenolpyruvate + UDP-N-acetyl-alpha-D-glucosamine = UDP-N-acetyl-3-O-(1-carboxyvinyl)-alpha-D-glucosamine + phosphate. Its pathway is cell wall biogenesis; peptidoglycan biosynthesis. Cell wall formation. Adds enolpyruvyl to UDP-N-acetylglucosamine. This Clostridium tetani (strain Massachusetts / E88) protein is UDP-N-acetylglucosamine 1-carboxyvinyltransferase 2.